Here is a 128-residue protein sequence, read N- to C-terminus: Sm-like protein LSM1A (128 aa).

The Sm domain occupies 10-85; sequence FFSTSLAAYL…VVLIGELDVE (76 aa).

It belongs to the snRNP Sm proteins family. In terms of assembly, component of the heptameric LSM1-LSM7 complex that forms a seven-membered ring structure with a donut shape. The LSM subunits are arranged in the order LSM1, LSM2, LSM3, LSM6, LSM5, LSM7 and LSM4. LSM1A subunit interacts only with its two neighboring subunits, LSM2 and LSM4. As to expression, expressed in roots, leaves, stems, flowers and siliques.

It localises to the cytoplasm. The protein localises to the P-body. In terms of biological role, component of the cytoplasmic LSM1-LSM7 complex which is involved in mRNA degradation by promoting decapping and leading to accurate 5'-3' mRNA decay. LSM1A and LSM1B are essential for the formation of the cytoplasmic LSM1-LSM7 complex which regulates developmental gene expression by the decapping of specific development-related transcripts. Required for P-body formation during heat stress. This is Sm-like protein LSM1A from Arabidopsis thaliana (Mouse-ear cress).